A 590-amino-acid polypeptide reads, in one-letter code: KNR4/SMI1 homolog 2 (590 aa).

3 disordered regions span residues 59-97, 216-239, and 407-590; these read SSSHSLIEGGNNGSRTSLSRNGSSTTVGYRPGLRSSNTN, FQHQQQQQQHQKATSSADASETHG, and TPQR…DVAL. The span at 71 to 85 shows a compositional bias: polar residues; that stretch reads GSRTSLSRNGSSTTV. A compositionally biased stretch (low complexity) spans 217–226; the sequence is QHQQQQQQHQ. The segment covering 430–454 has biased composition (polar residues); it reads PSMSGATANTNKSQNPLINMESSSK. 2 stretches are compositionally biased toward basic and acidic residues: residues 470–481 and 489–515; these read PEEPVKKSEVKS and EPEKETKQKDEIIEEKPEVIETPAKED. The segment covering 516–528 has biased composition (acidic residues); it reads DKEEEEEEQEEEK. Residues 554–568 show a composition bias toward basic residues; the sequence is TQKKNQSKKAKKQQQ. The span at 576 to 590 shows a compositional bias: acidic residues; the sequence is NDVEEVAEDLNDVAL.

The protein belongs to the KNR4/SMI1 family.

This Debaryomyces hansenii (strain ATCC 36239 / CBS 767 / BCRC 21394 / JCM 1990 / NBRC 0083 / IGC 2968) (Yeast) protein is KNR4/SMI1 homolog 2.